Reading from the N-terminus, the 305-residue chain is tRNA pseudouridine synthase B (305 aa).

Residue Asp-48 is the Nucleophile of the active site.

This sequence belongs to the pseudouridine synthase TruB family. Type 1 subfamily.

It carries out the reaction uridine(55) in tRNA = pseudouridine(55) in tRNA. Its function is as follows. Responsible for synthesis of pseudouridine from uracil-55 in the psi GC loop of transfer RNAs. In Pseudomonas fluorescens (strain ATCC BAA-477 / NRRL B-23932 / Pf-5), this protein is tRNA pseudouridine synthase B.